The following is a 427-amino-acid chain: mRNA cap guanine-N(7) methyltransferase (427 aa).

The tract at residues 1–79 (MSLNYEQNAA…EPETEAASGA (79 aa)) is disordered. Phosphoserine is present on residues Ser-22, Ser-24, Ser-29, Ser-46, and Ser-48. Residues 44 to 57 (HVSKSPREYYDEPG) show a composition bias toward basic and acidic residues. The mRNA cap 0 methyltransferase domain occupies 103–411 (SKIFFMRNFN…LYLVCAFKKC (309 aa)). Residue 112-113 (NN) participates in mRNA binding. S-adenosyl-L-methionine is bound by residues Lys-116, Cys-143, Asp-165, Asp-202, Gln-225, and Tyr-230.

Belongs to the class I-like SAM-binding methyltransferase superfamily. mRNA cap 0 methyltransferase family.

It is found in the nucleus. The enzyme catalyses a 5'-end (5'-triphosphoguanosine)-ribonucleoside in mRNA + S-adenosyl-L-methionine = a 5'-end (N(7)-methyl 5'-triphosphoguanosine)-ribonucleoside in mRNA + S-adenosyl-L-homocysteine. Functionally, mRNA-capping methyltransferase that methylates the N7 position of the added guanosine to the 5'-cap structure of mRNAs. Binds RNA containing 5'-terminal GpppC. The sequence is that of mRNA cap guanine-N(7) methyltransferase from Drosophila melanogaster (Fruit fly).